The following is a 197-amino-acid chain: Imidazoleglycerol-phosphate dehydratase (197 aa).

This sequence belongs to the imidazoleglycerol-phosphate dehydratase family.

It localises to the cytoplasm. The enzyme catalyses D-erythro-1-(imidazol-4-yl)glycerol 3-phosphate = 3-(imidazol-4-yl)-2-oxopropyl phosphate + H2O. The protein operates within amino-acid biosynthesis; L-histidine biosynthesis; L-histidine from 5-phospho-alpha-D-ribose 1-diphosphate: step 6/9. The chain is Imidazoleglycerol-phosphate dehydratase from Thermobifida fusca (strain YX).